The sequence spans 346 residues: Putative aminopeptidase YhfE (346 aa).

A divalent metal cation contacts are provided by histidine 68 and aspartate 185. The active-site Proton acceptor is glutamate 219. Positions 220, 240, and 320 each coordinate a divalent metal cation.

It belongs to the peptidase M42 family. A divalent metal cation is required as a cofactor.

The protein is Putative aminopeptidase YhfE (yhfE) of Bacillus subtilis (strain 168).